The chain runs to 86 residues: ATP synthase subunit c (86 aa).

A run of 2 helical transmembrane segments spans residues 8–28 and 64–84; these read VLGCSAIGAGLAMIAGIGPGI and TTGLYGFAVAIILLFANPLLG.

This sequence belongs to the ATPase C chain family. F-type ATPases have 2 components, F(1) - the catalytic core - and F(0) - the membrane proton channel. F(1) has five subunits: alpha(3), beta(3), gamma(1), delta(1), epsilon(1). F(0) has three main subunits: a(1), b(2) and c(10-14). The alpha and beta chains form an alternating ring which encloses part of the gamma chain. F(1) is attached to F(0) by a central stalk formed by the gamma and epsilon chains, while a peripheral stalk is formed by the delta and b chains.

It localises to the cell membrane. Its function is as follows. F(1)F(0) ATP synthase produces ATP from ADP in the presence of a proton or sodium gradient. F-type ATPases consist of two structural domains, F(1) containing the extramembraneous catalytic core and F(0) containing the membrane proton channel, linked together by a central stalk and a peripheral stalk. During catalysis, ATP synthesis in the catalytic domain of F(1) is coupled via a rotary mechanism of the central stalk subunits to proton translocation. Functionally, key component of the F(0) channel; it plays a direct role in translocation across the membrane. A homomeric c-ring of between 10-14 subunits forms the central stalk rotor element with the F(1) delta and epsilon subunits. This chain is ATP synthase subunit c, found in Lachnoclostridium phytofermentans (strain ATCC 700394 / DSM 18823 / ISDg) (Clostridium phytofermentans).